The chain runs to 95 residues: Co-chaperonin GroES (95 aa).

Belongs to the GroES chaperonin family. In terms of assembly, heptamer of 7 subunits arranged in a ring. Interacts with the chaperonin GroEL.

It is found in the cytoplasm. In terms of biological role, together with the chaperonin GroEL, plays an essential role in assisting protein folding. The GroEL-GroES system forms a nano-cage that allows encapsulation of the non-native substrate proteins and provides a physical environment optimized to promote and accelerate protein folding. GroES binds to the apical surface of the GroEL ring, thereby capping the opening of the GroEL channel. The sequence is that of Co-chaperonin GroES from Streptococcus equi subsp. equi (strain 4047).